A 424-amino-acid polypeptide reads, in one-letter code: PtdIns3K complex I subunit atg38 (424 aa).

A coiled-coil region spans residues 50–78 (LIKRCANNQIEELMVRIRELRESLPNKQT). Residues 73-212 (LPNKQTPISM…DPAYQNTNEQ (140 aa)) form a required for interaction with atg8 region. Positions 178 to 181 (FLIV) match the AIM motif. The span at 268 to 284 (LSEEEMGRSHKREESFK) shows a compositional bias: basic and acidic residues. The tract at residues 268–299 (LSEEEMGRSHKREESFKRAFGHASSSESSIGE) is disordered. Residues 390–420 (TVDSQLKIKQLETQIATLQKQLEQFQTSTLD) are a coiled coil.

It belongs to the ATG38 family. In terms of assembly, component of the autophagy-specific vps34 PI3-kinase complex I composed of vps15, atg6, pik3/vps34, atg14 and atg38. Interacts (via AIM motif) with atg8; the interaction is direct and leads to recruitment of the autophagy-specific vps34 PI3-kinase complex I to the phagophore assembly site.

It is found in the preautophagosomal structure membrane. The protein localises to the cytoplasm. The protein resides in the cytosol. Functions as a part of the autophagy-specific VPS34 PI3-kinase complex I that plays a role in autophagosome assembly. This complex is essential to recruit the atg8-phosphatidylinositol conjugate and the atg12-atg5 conjugate to the pre-autophagosomal structure. By binding to atg8 at the phagophore assembly site, atg38 helps establish a positive feedback loop for recruitment of phagophore assembly proteins, including atg8. This chain is PtdIns3K complex I subunit atg38, found in Schizosaccharomyces pombe (strain 972 / ATCC 24843) (Fission yeast).